Reading from the N-terminus, the 108-residue chain is Ig kappa chain V region BS-5 (108 aa).

Positions 1-23 are framework-1; sequence DVVMTQTPASVSEPVGGTVTIKC. Cystine bridges form between Cys23–Cys88 and Cys80–Gly108. Residues 24 to 34 form a complementarity-determining-1 region; sequence QASQSIYSNLA. The framework-2 stretch occupies residues 35–49; that stretch reads WYQZKPGQPPKLLIY. The interval 50 to 56 is complementarity-determining-2; the sequence is KASTLES. Positions 57–88 are framework-3; the sequence is GVPSRFKGSGSGTDFTLTISDLECADAATYFC. The interval 89 to 97 is complementarity-determining-3; it reads QGSBYTGTV. Residues 98–107 form a framework-4 region; the sequence is FGGGTEVVVK.

In Oryctolagus cuniculus (Rabbit), this protein is Ig kappa chain V region BS-5.